Reading from the N-terminus, the 93-residue chain is Pyrimidine/purine nucleoside phosphorylase (93 aa).

Belongs to the nucleoside phosphorylase PpnP family.

It carries out the reaction a purine D-ribonucleoside + phosphate = a purine nucleobase + alpha-D-ribose 1-phosphate. It catalyses the reaction adenosine + phosphate = alpha-D-ribose 1-phosphate + adenine. The enzyme catalyses cytidine + phosphate = cytosine + alpha-D-ribose 1-phosphate. The catalysed reaction is guanosine + phosphate = alpha-D-ribose 1-phosphate + guanine. It carries out the reaction inosine + phosphate = alpha-D-ribose 1-phosphate + hypoxanthine. It catalyses the reaction thymidine + phosphate = 2-deoxy-alpha-D-ribose 1-phosphate + thymine. The enzyme catalyses uridine + phosphate = alpha-D-ribose 1-phosphate + uracil. The catalysed reaction is xanthosine + phosphate = alpha-D-ribose 1-phosphate + xanthine. Catalyzes the phosphorolysis of diverse nucleosides, yielding D-ribose 1-phosphate and the respective free bases. Can use uridine, adenosine, guanosine, cytidine, thymidine, inosine and xanthosine as substrates. Also catalyzes the reverse reactions. The chain is Pyrimidine/purine nucleoside phosphorylase from Vibrio vulnificus (strain CMCP6).